Reading from the N-terminus, the 492-residue chain is Steroid 21-hydroxylase (492 aa).

The heme b site is built by Arg91 and Lys120. Residue Arg231 coordinates 17alpha-hydroxyprogesterone. Arg231 is a binding site for progesterone. Positions 363, 424, and 426 each coordinate heme b.

It belongs to the cytochrome P450 family. It depends on heme b as a cofactor.

It localises to the endoplasmic reticulum membrane. It is found in the microsome membrane. The catalysed reaction is 17alpha-hydroxyprogesterone + reduced [NADPH--hemoprotein reductase] + O2 = 11-deoxycortisol + oxidized [NADPH--hemoprotein reductase] + H2O + H(+). The enzyme catalyses progesterone + reduced [NADPH--hemoprotein reductase] + O2 = 21-hydroxyprogesterone + oxidized [NADPH--hemoprotein reductase] + H2O + H(+). Its function is as follows. Specifically catalyzes the 21-hydroxylation of steroids. Required for the adrenal synthesis of mineralocorticoids and glucocorticoids. The polypeptide is Steroid 21-hydroxylase (CYP21) (Canis lupus familiaris (Dog)).